A 423-amino-acid polypeptide reads, in one-letter code: Cytochrome c biogenesis protein Ccs1 (423 aa).

3 helical membrane-spanning segments follow: residues 11–31, 70–90, and 153–173; these read LKFA…GSII, NFWF…CTFF, and IAPV…IFAS.

The protein belongs to the Ccs1/CcsB family. In terms of assembly, may interact with CcsA.

It is found in the plastid. It localises to the chloroplast thylakoid membrane. Required during biogenesis of c-type cytochromes (cytochrome c6 and cytochrome f) at the step of heme attachment. This Heterosigma akashiwo (strain NIES-293 / 8280G21-1) protein is Cytochrome c biogenesis protein Ccs1.